Reading from the N-terminus, the 31-residue chain is Cytochrome b6-f complex subunit 6 (31 aa).

A helical membrane pass occupies residues 4–24 (ITSYFGFLLVALTITSALFIG).

The protein belongs to the PetL family. The 4 large subunits of the cytochrome b6-f complex are cytochrome b6, subunit IV (17 kDa polypeptide, PetD), cytochrome f and the Rieske protein, while the 4 small subunits are PetG, PetL, PetM and PetN. The complex functions as a dimer.

Its subcellular location is the plastid. It localises to the chloroplast thylakoid membrane. Functionally, component of the cytochrome b6-f complex, which mediates electron transfer between photosystem II (PSII) and photosystem I (PSI), cyclic electron flow around PSI, and state transitions. PetL is important for photoautotrophic growth as well as for electron transfer efficiency and stability of the cytochrome b6-f complex. This Pelargonium hortorum (Common geranium) protein is Cytochrome b6-f complex subunit 6.